A 125-amino-acid polypeptide reads, in one-letter code: Small ribosomal subunit protein eS8 (125 aa).

Basic residues predominate over residues 1-23 (MQFQGRSRRKYTGAKLKSARGKR). The tract at residues 1 to 34 (MQFQGRSRRKYTGAKLKSARGKRKFELGREPAAT) is disordered.

This sequence belongs to the eukaryotic ribosomal protein eS8 family. As to quaternary structure, part of the 30S ribosomal subunit.

In Methanococcoides burtonii (strain DSM 6242 / NBRC 107633 / OCM 468 / ACE-M), this protein is Small ribosomal subunit protein eS8.